Here is a 250-residue protein sequence, read N- to C-terminus: LexA repressor (250 aa).

Residues 1–21 are compositionally biased toward basic and acidic residues; sequence MTSQERGTRRGDTRGNVRDFP. A disordered region spans residues 1 to 33; it reads MTSQERGTRRGDTRGNVRDFPDSPADASGLTQR. The H-T-H motif DNA-binding region spans 54 to 74; sequence VREIGEAVGLTSTSSVAHQLK. Residues S174 and K211 each act as for autocatalytic cleavage activity in the active site.

Belongs to the peptidase S24 family. As to quaternary structure, homodimer.

The enzyme catalyses Hydrolysis of Ala-|-Gly bond in repressor LexA.. Its function is as follows. Represses a number of genes involved in the response to DNA damage (SOS response), including recA and lexA. In the presence of single-stranded DNA, RecA interacts with LexA causing an autocatalytic cleavage which disrupts the DNA-binding part of LexA, leading to derepression of the SOS regulon and eventually DNA repair. This Parafrankia sp. (strain EAN1pec) protein is LexA repressor.